Consider the following 462-residue polypeptide: Serine carboxypeptidase-like 28 (462 aa).

A signal peptide spans 1–26; sequence MMITKKLYQCMCLLCMVIALLDVVSS. Asn49 and Asn144 each carry an N-linked (GlcNAc...) asparagine glycan. Intrachain disulfides connect Cys93/Cys342, Cys254/Cys266, and Cys290/Cys311. Ser186 is an active-site residue. Residue Asn256 is glycosylated (N-linked (GlcNAc...) asparagine). Residue Asn334 is glycosylated (N-linked (GlcNAc...) asparagine). Active-site residues include Asp379 and His434. Asn454 carries N-linked (GlcNAc...) asparagine glycosylation.

The protein belongs to the peptidase S10 family. In terms of tissue distribution, expressed in seedlings, roots and senescent leaves.

It is found in the secreted. Its function is as follows. Probable carboxypeptidase. The polypeptide is Serine carboxypeptidase-like 28 (SCPL28) (Arabidopsis thaliana (Mouse-ear cress)).